The chain runs to 285 residues: NADPH-dependent 7-cyano-7-deazaguanine reductase (285 aa).

91 to 93 (IES) provides a ligand contact to substrate. 93 to 94 (SK) is an NADPH binding site. The active-site Thioimide intermediate is the cysteine 191. Catalysis depends on aspartate 198, which acts as the Proton donor. A substrate-binding site is contributed by 230–231 (HE). Position 259-260 (259-260 (RG)) interacts with NADPH.

This sequence belongs to the GTP cyclohydrolase I family. QueF type 2 subfamily. As to quaternary structure, homodimer.

The protein localises to the cytoplasm. The catalysed reaction is 7-aminomethyl-7-carbaguanine + 2 NADP(+) = 7-cyano-7-deazaguanine + 2 NADPH + 3 H(+). The protein operates within tRNA modification; tRNA-queuosine biosynthesis. Catalyzes the NADPH-dependent reduction of 7-cyano-7-deazaguanine (preQ0) to 7-aminomethyl-7-deazaguanine (preQ1). This is NADPH-dependent 7-cyano-7-deazaguanine reductase from Legionella pneumophila (strain Lens).